A 430-amino-acid polypeptide reads, in one-letter code: Tol-Pal system protein TolB (430 aa).

The N-terminal stretch at 1–21 (MKQALRVAFGFLILWASVLHA) is a signal peptide.

Belongs to the TolB family. The Tol-Pal system is composed of five core proteins: the inner membrane proteins TolA, TolQ and TolR, the periplasmic protein TolB and the outer membrane protein Pal. They form a network linking the inner and outer membranes and the peptidoglycan layer.

It localises to the periplasm. Its function is as follows. Part of the Tol-Pal system, which plays a role in outer membrane invagination during cell division and is important for maintaining outer membrane integrity. TolB occupies a key intermediary position in the Tol-Pal system because it communicates directly with both membrane-embedded components, Pal in the outer membrane and TolA in the inner membrane. The polypeptide is Tol-Pal system protein TolB (Shigella boydii serotype 4 (strain Sb227)).